A 241-amino-acid polypeptide reads, in one-letter code: Homeobox protein TGIF2LX (241 aa).

Disordered regions lie at residues 1–58 (MEAA…GNLP) and 126–209 (TGKD…VSPE). Polar residues predominate over residues 21-39 (AKTQSPAQDTSIMSRNNAD). The homeobox; TALE-type DNA-binding region spans 48 to 111 (EHKKKRKGNL…INARRRILPD (64 aa)).

Belongs to the TALE/TGIF homeobox family.

It localises to the nucleus. In terms of biological role, may have a transcription role in testis. This Gorilla gorilla gorilla (Western lowland gorilla) protein is Homeobox protein TGIF2LX (TGIF2LX).